The primary structure comprises 706 residues: uncharacterized protein (706 aa).

This is an uncharacterized protein from Rickettsia prowazekii (strain Madrid E).